Here is a 238-residue protein sequence, read N- to C-terminus: Survival of motor neuron-related-splicing factor 30 (238 aa).

Residues 72 to 132 (SWKVGDKCMA…KPVEEGRKAK (61 aa)) form the Tudor domain. Residues 142-160 (KKEMIAQQREYKKKKALKK) carry the Nuclear localization signal motif. S201 carries the phosphoserine modification. Position 219 is an N6-acetyllysine (K219).

It belongs to the SMN family. In terms of assembly, associates with spliceosomes. Associates with U4/U5/U6 tri-snRNP and with U2 snRNP.

Its subcellular location is the nucleus speckle. It is found in the nucleus. It localises to the cajal body. Involved in spliceosome assembly. This is Survival of motor neuron-related-splicing factor 30 (Smndc1) from Rattus norvegicus (Rat).